The primary structure comprises 272 residues: Putative phosphoenolpyruvate synthase regulatory protein (272 aa).

152-159 is a binding site for ADP; it reads GVSRSGKT.

Belongs to the pyruvate, phosphate/water dikinase regulatory protein family. PSRP subfamily.

It carries out the reaction [pyruvate, water dikinase] + ADP = [pyruvate, water dikinase]-phosphate + AMP + H(+). The enzyme catalyses [pyruvate, water dikinase]-phosphate + phosphate + H(+) = [pyruvate, water dikinase] + diphosphate. Bifunctional serine/threonine kinase and phosphorylase involved in the regulation of the phosphoenolpyruvate synthase (PEPS) by catalyzing its phosphorylation/dephosphorylation. This is Putative phosphoenolpyruvate synthase regulatory protein from Hahella chejuensis (strain KCTC 2396).